A 99-amino-acid polypeptide reads, in one-letter code: Cyclin-dependent protein kinase inhibitor SMR7 (99 aa).

A disordered region spans residues 49-70; that stretch reads ICITPTARGAKTPECPAAPRKR.

As to expression, expressed in root meristems after induction.

Probable cyclin-dependent protein kinase (CDK) inhibitor that functions as a repressor of mitosis in the endoreduplication cell cycle. Acts as a potent cell cycle inhibitor, regulating a hydroxyurea-dependent checkpoint in leaves. The polypeptide is Cyclin-dependent protein kinase inhibitor SMR7 (Arabidopsis thaliana (Mouse-ear cress)).